The sequence spans 313 residues: Ornithine carbamoyltransferase (313 aa).

Residues S61–T64, Q88, R112, and H139–Q142 each bind carbamoyl phosphate. Residues N170, D228, and S232–M233 contribute to the L-ornithine site. Residues C268–L269 and R296 contribute to the carbamoyl phosphate site.

It belongs to the aspartate/ornithine carbamoyltransferase superfamily. OTCase family.

It localises to the cytoplasm. The enzyme catalyses carbamoyl phosphate + L-ornithine = L-citrulline + phosphate + H(+). Its pathway is amino-acid biosynthesis; L-arginine biosynthesis; L-arginine from L-ornithine and carbamoyl phosphate: step 1/3. In terms of biological role, reversibly catalyzes the transfer of the carbamoyl group from carbamoyl phosphate (CP) to the N(epsilon) atom of ornithine (ORN) to produce L-citrulline. The chain is Ornithine carbamoyltransferase from Bordetella parapertussis (strain 12822 / ATCC BAA-587 / NCTC 13253).